The primary structure comprises 438 residues: Serine/threonine-protein kinase VIK (438 aa).

The interval 1-31 (MSSDSPAAGDGGEQAAAGTSVPSPSYDKQKE) is disordered. 3 ANK repeats span residues 36–65 (SRTS…TLVH), 70–99 (DKRT…DVNA), and 103–133 (WKNT…SYGQ). In terms of domain architecture, Protein kinase spans 162 to 427 (FSNAAMIGKG…KRLEKIKETL (266 aa)). ATP-binding positions include 168–176 (IGKGSFGEI) and Lys189. Asp285 acts as the Proton acceptor in catalysis.

Belongs to the protein kinase superfamily. Ser/Thr protein kinase family. Interacts with BRL2. Binds to MSSP1/TMT1 at the tonoplast. In terms of processing, phosphorylated. Restricted to mature vascular cells. Mostly expressed in mature leaves and seeds, and, to a lower level, in seedlings, young leaves, flowers and siliques.

It is found in the vacuole. It catalyses the reaction L-seryl-[protein] + ATP = O-phospho-L-seryl-[protein] + ADP + H(+). The catalysed reaction is L-threonyl-[protein] + ATP = O-phospho-L-threonyl-[protein] + ADP + H(+). Functionally, serine/threonine protein kinase which may function as an adapter protein for BRL2. Required during vascular development for the establishment of vein pattern in foliar organs. Mediates MSSP1/TMT1 phosphorylation and activation to enhance its carrier activity and consequently vacuolar sugar accumulation, particularly in response to cold. This chain is Serine/threonine-protein kinase VIK, found in Arabidopsis thaliana (Mouse-ear cress).